Reading from the N-terminus, the 592-residue chain is Protein phosphatase EYA1 (592 aa).

2 disordered regions span residues 1-95 (MEMQ…RPYP) and 240-320 (MTSS…PDSD). Over residues 8-26 (SPHSRLSGSSESPSGPKLG) the composition is skewed to low complexity. The segment covering 28-63 (SHINSNSMTPNGTEVKTEPMSSSETASTTADGSLNN) has biased composition (polar residues). 2 stretches are compositionally biased toward low complexity: residues 64 to 75 (FSGSAIGSSSFS) and 241 to 253 (TSSN…PSTN). The segment covering 254 to 287 (ATYQLQEPPSGITSQAVTDPTAEYSTIHSPSTPI) has biased composition (polar residues). The segment covering 288-303 (KDSDSDRLRRGSDGKS) has biased composition (basic and acidic residues). Aspartate 328 acts as the Nucleophile in catalysis. Residues aspartate 328, aspartate 330, and aspartate 556 each contribute to the Mg(2+) site. Aspartate 330 (proton donor) is an active-site residue.

It belongs to the HAD-like hydrolase superfamily. EYA family. As to quaternary structure, probably interacts with SIX2, SIX4 and SIX5. Interacts with H2AX in response to DNA damage. Interacts with SIX3; promotes EYA1 translocation to the nucleus. Mg(2+) serves as cofactor. Post-translationally, sumoylated with SUMO1. In terms of tissue distribution, in the embryo, highly expressed in kidney with lower levels in brain. Weakly expressed in lung. In the adult, highly expressed in heart and skeletal muscle. Weakly expressed in brain and liver. No expression in eye or kidney.

Its subcellular location is the cytoplasm. It localises to the nucleus. It carries out the reaction O-phospho-L-tyrosyl-[protein] + H2O = L-tyrosyl-[protein] + phosphate. The enzyme catalyses O-phospho-L-seryl-[protein] + H2O = L-seryl-[protein] + phosphate. It catalyses the reaction O-phospho-L-threonyl-[protein] + H2O = L-threonyl-[protein] + phosphate. Functions both as protein phosphatase and as transcriptional coactivator for SIX1, and probably also for SIX2, SIX4 and SIX5. Tyrosine phosphatase that dephosphorylates 'Tyr-142' of histone H2AX (H2AXY142ph) and promotes efficient DNA repair via the recruitment of DNA repair complexes containing MDC1. 'Tyr-142' phosphorylation of histone H2AX plays a central role in DNA repair and acts as a mark that distinguishes between apoptotic and repair responses to genotoxic stress. Its function as histone phosphatase may contribute to its function in transcription regulation during organogenesis. Also has phosphatase activity with proteins phosphorylated on Ser and Thr residues (in vitro). Required for normal embryonic development of the craniofacial and trunk skeleton, kidneys and ears. Together with SIX1, it plays an important role in hypaxial muscle development; in this it is functionally redundant with EYA2. This is Protein phosphatase EYA1 (EYA1) from Homo sapiens (Human).